A 457-amino-acid polypeptide reads, in one-letter code: Multidrug resistance protein MdtK (457 aa).

The next 12 helical transmembrane spans lie at L11–V31, A46–L66, W93–I113, A127–L147, G160–Y180, L188–M208, L243–V263, L283–F301, Y316–F336, L357–V377, I387–G407, and P418–L438.

It belongs to the multi antimicrobial extrusion (MATE) (TC 2.A.66.1) family. MdtK subfamily.

Its subcellular location is the cell inner membrane. Functionally, multidrug efflux pump that functions probably as a Na(+)/drug antiporter. The protein is Multidrug resistance protein MdtK of Yersinia pseudotuberculosis serotype IB (strain PB1/+).